The following is a 227-amino-acid chain: Extracellular deoxyribonuclease (227 aa).

An N-terminal signal peptide occupies residues 1–20; it reads MFRPLLSFTLARLVSLPLHA.

The protein belongs to the EndA/NucM nuclease family.

The protein resides in the secreted. This Aeromonas hydrophila protein is Extracellular deoxyribonuclease.